The following is a 150-amino-acid chain: Ribosome maturation factor RimP (150 aa).

The protein belongs to the RimP family.

It localises to the cytoplasm. Functionally, required for maturation of 30S ribosomal subunits. The sequence is that of Ribosome maturation factor RimP from Thermotoga sp. (strain RQ2).